The sequence spans 295 residues: Lipoyl synthase (295 aa).

Cys-34, Cys-39, Cys-45, Cys-60, Cys-64, Cys-67, and Ser-273 together coordinate [4Fe-4S] cluster. The Radical SAM core domain maps to 46–262; that stretch reads WNKRHATIMV…KRMAYAKGFS (217 aa).

The protein belongs to the radical SAM superfamily. Lipoyl synthase family. Requires [4Fe-4S] cluster as cofactor.

The protein resides in the cytoplasm. The catalysed reaction is [[Fe-S] cluster scaffold protein carrying a second [4Fe-4S](2+) cluster] + N(6)-octanoyl-L-lysyl-[protein] + 2 oxidized [2Fe-2S]-[ferredoxin] + 2 S-adenosyl-L-methionine + 4 H(+) = [[Fe-S] cluster scaffold protein] + N(6)-[(R)-dihydrolipoyl]-L-lysyl-[protein] + 4 Fe(3+) + 2 hydrogen sulfide + 2 5'-deoxyadenosine + 2 L-methionine + 2 reduced [2Fe-2S]-[ferredoxin]. Its pathway is protein modification; protein lipoylation via endogenous pathway; protein N(6)-(lipoyl)lysine from octanoyl-[acyl-carrier-protein]: step 2/2. Its function is as follows. Catalyzes the radical-mediated insertion of two sulfur atoms into the C-6 and C-8 positions of the octanoyl moiety bound to the lipoyl domains of lipoate-dependent enzymes, thereby converting the octanoylated domains into lipoylated derivatives. The polypeptide is Lipoyl synthase (Anaplasma phagocytophilum (strain HZ)).